We begin with the raw amino-acid sequence, 222 residues long: Adapter protein MecA (222 aa).

The protein belongs to the MecA family. As to quaternary structure, homodimer.

Enables the recognition and targeting of unfolded and aggregated proteins to the ClpC protease or to other proteins involved in proteolysis. In Lysinibacillus sphaericus (strain C3-41), this protein is Adapter protein MecA.